A 1113-amino-acid polypeptide reads, in one-letter code: Sterol regulatory element binding protein sbp-1 (1113 aa).

Positions 1–52 (MNEEFEGDVPMSDPFLSLVTKLDDIAPFPNNDPLDFDMEHNWQEPGPSQQPD) are transcriptional activation (acidic). Disordered stretches follow at residues 24–68 (DIAP…EYYD), 101–132 (LGGGRGPSLAATQQLSGEGPASMLNPLQTSPP), 206–274 (SPYD…SPQN), and 290–345 (EVER…SQGT). Positions 229–238 (PHHHHHHPMP) are enriched in basic residues. The segment covering 324–337 (AEGDEDEDDEDSDS) has biased composition (acidic residues). Residues 355-368 (ERRTAHNLIEKKYR) form a basic motif region. The 51-residue stretch at 355 to 405 (ERRTAHNLIEKKYRCSINDRIQQLKVLLCGDEAKLSKSATLRRAIEHIEEV) folds into the bHLH domain. A helix-loop-helix motif region spans residues 369–405 (CSINDRIQQLKVLLCGDEAKLSKSATLRRAIEHIEEV). The stretch at 395–422 (LRRAIEHIEEVEHENQVLKHHVEQMRKT) forms a coiled coil. A disordered region spans residues 437–472 (TEYSARSPVESSPSPPRNERKRSRMSTTTPMKNGTR). Transmembrane regions (helical) follow at residues 478 to 498 (VTLFAMLLAVLIFNPIGLLAG) and 541 to 561 (MSYVWVFNILMIIYVVVKLLI).

Processed in the Golgi apparatus, releasing the protein from the membrane. Post-translationally, ubiquitinated; the nuclear form has a rapid turnover and is rapidly ubiquitinated and degraded by the proteasome in the nucleus. In terms of tissue distribution, broadly expressed, including many cells in the head. Expressed in the intestine.

It localises to the nucleus. It is found in the endoplasmic reticulum membrane. Transcription factor involved in maintaining normal fat levels. Regulates the expression of genes involved in lipid metabolism in response to nutrient availability, such as the fatty-acid desaturases fat-5, fat-6 and fat-7. In response to a high-glucose diet, promotes fatty acid synthesis, elongation and desaturation, acting in concert with transcription factor mxl-3. Plays a role in synthesis of monomethyl branched-chain fatty acids (mmBCFAs) as well as other very-long-chain fatty acids. Downstream of the cis-Golgi membrane protein eas-1/GOLT1B and the E3 ubiquitin ligase rnf-145/RNF145, plays a role in the regulation of glial size, perhaps by modulating synthesis of long-chain polyunsaturated fatty-acids (LC-PUFA). Modulates expression of genes in the one-carbon cycle, which produces the methyl donor S-adenosylmethionine (SAM). Probably involved in a feedback loop in which decreased levels of SAM lead to increased transcriptional activity of sbp-1, thereby causing lipid accumulation. Involved in the negative regulation of zinc homeostasis. Involved in the response to simulated microgravity, in concert with Mediator complex subunit mdt-15, probably acting in the intestine. Plays a role in transgenerational lipid accumulation in response to a high-fat diet, probably acting by upregulating wdr-5.1 expression to increase the level of trimethylated 'Lys-4' histone H3 (H3K4me3), which may then induce the expression of fat-5, fat-6 and fat-7. May act as an oxygen sensor for lipid metabolism. Functionally, precursor of the transcription factor form, which is embedded in the endoplasmic reticulum membrane. Processing of this form allows release of the transcription factor form that translocates into the nucleus and activates transcription of genes involved in sterol biosynthesis and lipid homeostasis. In terms of biological role, key transcription factor that regulates expression of genes involved in sterol biosynthesis and lipid homeostasis. The protein is Sterol regulatory element binding protein sbp-1 of Caenorhabditis elegans.